The sequence spans 443 residues: Trigger factor (443 aa).

The PPIase FKBP-type domain maps to 161–246 (ADGVTITYHG…VISVTAPRLP (86 aa)).

It belongs to the FKBP-type PPIase family. Tig subfamily.

The protein localises to the cytoplasm. It carries out the reaction [protein]-peptidylproline (omega=180) = [protein]-peptidylproline (omega=0). In terms of biological role, involved in protein export. Acts as a chaperone by maintaining the newly synthesized protein in an open conformation. Functions as a peptidyl-prolyl cis-trans isomerase. This chain is Trigger factor, found in Nitrosococcus oceani (strain ATCC 19707 / BCRC 17464 / JCM 30415 / NCIMB 11848 / C-107).